Here is a 303-residue protein sequence, read N- to C-terminus: UDP-N-acetylenolpyruvoylglucosamine reductase (303 aa).

An FAD-binding PCMH-type domain is found at 29–196 (KIGGPADILI…LEAVLQLEQK (168 aa)). The active site involves Arg174. The active-site Proton donor is the Ser225. Glu295 is a catalytic residue.

Belongs to the MurB family. FAD is required as a cofactor.

It localises to the cytoplasm. It catalyses the reaction UDP-N-acetyl-alpha-D-muramate + NADP(+) = UDP-N-acetyl-3-O-(1-carboxyvinyl)-alpha-D-glucosamine + NADPH + H(+). It participates in cell wall biogenesis; peptidoglycan biosynthesis. Functionally, cell wall formation. This chain is UDP-N-acetylenolpyruvoylglucosamine reductase, found in Bacillus velezensis (strain DSM 23117 / BGSC 10A6 / LMG 26770 / FZB42) (Bacillus amyloliquefaciens subsp. plantarum).